Consider the following 651-residue polypeptide: Cysteine-rich receptor-like protein kinase 42 (651 aa).

The signal sequence occupies residues 1-28 (MRCLTKTRSFHYVIIFYSFFFLPFLSSS). At 29 to 251 (SDDQRTTVSG…HHKFHVLFNK (223 aa)) the chain is on the extracellular side. 2 Gnk2-homologous domains span residues 35-135 (TVSG…TYEF) and 137-236 (DESV…DHKF). N79 and N151 each carry an N-linked (GlcNAc...) asparagine glycan. A helical membrane pass occupies residues 252–272 (GVIVAIVLTTSAFVMLILLAT). Topologically, residues 273-651 (YVIMTKVSKT…SSESSTTRTI (379 aa)) are cytoplasmic. Residues 315-604 (FSHKKMLGQG…IPSPTSPPFL (290 aa)) form the Protein kinase domain. Residues 321-329 (LGQGGNGTV) and K343 each bind ATP. At Y388 the chain carries Phosphotyrosine. D440 serves as the catalytic Proton acceptor. Phosphoserine is present on residues S444 and S473. Phosphothreonine occurs at positions 474 and 479. Y487 is modified (phosphotyrosine).

Belongs to the protein kinase superfamily. Ser/Thr protein kinase family. CRK subfamily.

It localises to the membrane. The enzyme catalyses L-seryl-[protein] + ATP = O-phospho-L-seryl-[protein] + ADP + H(+). The catalysed reaction is L-threonyl-[protein] + ATP = O-phospho-L-threonyl-[protein] + ADP + H(+). In Arabidopsis thaliana (Mouse-ear cress), this protein is Cysteine-rich receptor-like protein kinase 42 (CRK42).